A 101-amino-acid polypeptide reads, in one-letter code: Small ubiquitin-related modifier 1 (101 aa).

N-acetylserine is present on serine 2. Serine 2 is modified (phosphoserine). Lysine 7 is covalently cross-linked (Glycyl lysine isopeptide (Lys-Gly) (interchain with G-Cter in SUMO1); alternate). Lysine 7 is covalently cross-linked (Glycyl lysine isopeptide (Lys-Gly) (interchain with G-Cter in SUMO2); alternate). Serine 9 carries the phosphoserine modification. Glycyl lysine isopeptide (Lys-Gly) (interchain with G-Cter in SUMO2) cross-links involve residues lysine 16, lysine 17, and lysine 23. The interval 16 to 25 is (Microbial infection) Interaction with Tula hantavirus; that stretch reads KKEGEYIKLK. Residues 20–97 enclose the Ubiquitin-like domain; it reads EYIKLKVIGQ…IEVYQEQTGG (78 aa). Lysine 25 is covalently cross-linked (Glycyl lysine isopeptide (Lys-Gly) (interchain with G-Cter in SUMO1)). Serine 32 bears the Phosphoserine mark. Residues lysine 37, lysine 39, lysine 45, and lysine 46 each participate in a glycyl lysine isopeptide (Lys-Gly) (interchain with G-Cter in SUMO2) cross-link. A (Microbial infection) Interaction with Tula hantavirus region spans residues 37–40; sequence KVKM. A Glycyl lysine isopeptide (Gly-Lys) (interchain with K-? in acceptor proteins) cross-link involves residue glycine 97. A propeptide spanning residues 98 to 101 is cleaved from the precursor; that stretch reads HSTV.

It belongs to the ubiquitin family. SUMO subfamily. As to quaternary structure, covalently attached to KCNB1; UBE2I increases cross-linking with KCNB1 and PIAS1 decreases cross-links with KCNB1. Interacts with SAE2, RANBP2, PIAS1 and PIAS2. Interacts with PRKN. Covalently attached to a number of proteins such as IKFZ1, PML, RANGAP1, HIPK2, SP100, p53, p73-alpha, MDM2, JUN, DNMT3B and TDG. Also interacts with HIF1A, HIPK2, HIPK3, CHD3, EXOSC9, RAD51 and RAD52. Interacts with USP25 (via ts SIM domain); the interaction weakly sumoylates USP25. Interacts with SIMC1, CASP8AP2, RNF111 and SOBP (via SIM domains). Interacts with BHLHE40/DEC1. Interacts with RWDD3. Interacts with UBE2I/UBC9 and this interaction is enhanced in the presence of RWDD3. Interacts with MTA1. Interacts with SENP2. Interacts with HINT1. In terms of assembly, (Microbial infection) Interacts with Epstein-barr virus BGLF4. (Microbial infection) Interacts (via N-terminus) with Tula hantavirus nucleoprotein. As to quaternary structure, (Microbial infection) Interacts (via N-terminus) with Hantaan hantavirus nucleoprotein. Post-translationally, cleavage of precursor form by SENP1 or SENP2 is necessary for function. Polymeric SUMO1 chains undergo polyubiquitination by RNF4.

It localises to the nucleus membrane. Its subcellular location is the nucleus speckle. It is found in the cytoplasm. The protein resides in the nucleus. The protein localises to the PML body. It localises to the cell membrane. Its function is as follows. Ubiquitin-like protein that can be covalently attached to proteins as a monomer or a lysine-linked polymer. Covalent attachment via an isopeptide bond to its substrates requires prior activation by the E1 complex SAE1-SAE2 and linkage to the E2 enzyme UBE2I, and can be promoted by E3 ligases such as PIAS1-4, RANBP2 or CBX4. This post-translational modification on lysine residues of proteins plays a crucial role in a number of cellular processes such as nuclear transport, DNA replication and repair, mitosis and signal transduction. Involved for instance in targeting RANGAP1 to the nuclear pore complex protein RANBP2. Covalently attached to the voltage-gated potassium channel KCNB1; this modulates the gating characteristics of KCNB1. Polymeric SUMO1 chains are also susceptible to polyubiquitination which functions as a signal for proteasomal degradation of modified proteins. May also regulate a network of genes involved in palate development. Covalently attached to ZFHX3. The protein is Small ubiquitin-related modifier 1 (SUMO1) of Homo sapiens (Human).